Consider the following 387-residue polypeptide: Protein salvador homolog 1 (387 aa).

Phosphoserine is present on residues Ser95 and Ser138. WW domains are found at residues 201–234 (LPLPPGWSVDWTMRGRKYYIDHNTNTTHWSHPLE) and 236–269 (EGLPPGWERVESSEFGTYYVDHTNKRAQYRHPCA). At Thr212 the chain carries Phosphothreonine. Residues 323 to 370 (ILKWELFQLADLDTYQGMLKLLFMKELEQIVKLYEAYRQALVTELENR) enclose the SARAH domain.

In terms of assembly, homodimer. Stabilized through interaction with STK3/MST2 or STK4/MST1. Interacts (via SARAH domain) with isoform 1 of NEK2. Interacts with ESR1 only in the presence of STK3/MST2. Interacts with WTIP and AJUBA. Post-translationally, phosphorylated by STK3/MST2 and STK4/MST1. Phosphorylation is not required for SAV1 stability and may increase the number of protein binding sites on the scaffold molecule.

The protein resides in the nucleus. The protein localises to the cytoplasm. In terms of biological role, regulator of STK3/MST2 and STK4/MST1 in the Hippo signaling pathway which plays a pivotal role in organ size control and tumor suppression by restricting proliferation and promoting apoptosis. The core of this pathway is composed of a kinase cascade wherein STK3/MST2 and STK4/MST1, in complex with its regulatory protein SAV1, phosphorylates and activates LATS1/2 in complex with its regulatory protein MOB1, which in turn phosphorylates and inactivates YAP1 oncoprotein and WWTR1/TAZ. Phosphorylation of YAP1 by LATS1/2 inhibits its translocation into the nucleus to regulate cellular genes important for cell proliferation, cell death, and cell migration. SAV1 is required for STK3/MST2 and STK4/MST1 activation and promotes cell-cycle exit and terminal differentiation in developing epithelial tissues. Plays a role in centrosome disjunction by regulating the localization of NEK2 to centrosomes, and its ability to phosphorylate CROCC and CEP250. In conjunction with STK3/MST2, activates the transcriptional activity of ESR1 through the modulation of its phosphorylation. In Rattus norvegicus (Rat), this protein is Protein salvador homolog 1.